The sequence spans 572 residues: ATP-dependent lipid A-core flippase (572 aa).

Helical transmembrane passes span 14–34 (IIPYKIPLFIAMFAMIVVAAL), 55–75 (VFFLQILPLIIIAIFFTKGVL), 148–168 (IFLLGVIFYMNWKLALICFLI), 249–269 (MEIIGGFAVAGIIWVGGSEVI), and 272–292 (SATPGTFFAFLTAMITAYDPV). Positions 22–304 (FIAMFAMIVV…VSQVNSTIQQ (283 aa)) constitute an ABC transmembrane type-1 domain. The ABC transporter domain maps to 338-571 (IEFHDVSFSY…EGEYQLLYNM (234 aa)). Position 370–377 (370–377 (GPSGGGKT)) interacts with ATP.

The protein belongs to the ABC transporter superfamily. Lipid exporter (TC 3.A.1.106) family. In terms of assembly, homodimer.

The protein resides in the cell inner membrane. It carries out the reaction ATP + H2O + lipid A-core oligosaccharideSide 1 = ADP + phosphate + lipid A-core oligosaccharideSide 2.. Functionally, involved in lipopolysaccharide (LPS) biosynthesis. Translocates lipid A-core from the inner to the outer leaflet of the inner membrane. Transmembrane domains (TMD) form a pore in the inner membrane and the ATP-binding domain (NBD) is responsible for energy generation. This chain is ATP-dependent lipid A-core flippase, found in Desulfotalea psychrophila (strain LSv54 / DSM 12343).